Consider the following 855-residue polypeptide: Vomeronasal type-2 receptor 26 (855 aa).

The signal sequence occupies residues 1–22 (MKLLTAFSPLVVLILFQEQISC). The Extracellular portion of the chain corresponds to 23 to 595 (YYLTKYASSG…FLAHEDPLGT (573 aa)). Asparagine 101 and asparagine 295 each carry an N-linked (GlcNAc...) asparagine glycan. A helical membrane pass occupies residues 596-616 (VLVSLAISLSAFSAMILGLFI). Topologically, residues 617–630 (CYRETPIVRANNRN) are cytoplasmic. A helical transmembrane segment spans residues 631 to 651 (LSYLLLISLKLCFSCSLMFIG). The Extracellular portion of the chain corresponds to 652–662 (QPRTVTCVLRQ). A helical membrane pass occupies residues 663–683 (IIFGIVFSIVISAILAKTFIV). The Cytoplasmic segment spans residues 684 to 706 (VMAFKAIKPGSILKMGMVTRLSN). Residues 707–727 (AIVCCGSIIQVCICAVWLGTY) form a helical membrane-spanning segment. Residues 728 to 753 (PPFPDVDMHSEFGQIILWCNEGSTLA) are Extracellular-facing. Residues 754–774 (FYCVLGYLGFLASLSLLIAFL) form a helical membrane-spanning segment. The Cytoplasmic segment spans residues 775 to 786 (ARRLPDSFNEAK). A helical transmembrane segment spans residues 787 to 807 (TITFSMLVFCSVWISFVPAYL). Residues 808 to 814 (SSKGKTM) lie on the Extracellular side of the membrane. The chain crosses the membrane as a helical span at residues 815–835 (VAVEILSILASSAGLLGCIFL). At 836–855 (PKCYVILLKSGGHSRKKFFK) the chain is on the cytoplasmic side.

This sequence belongs to the G-protein coupled receptor 3 family. In terms of tissue distribution, expressed in the basal epithelium of the vomeronasal organ. Located to vomeronasal sensory neurons that project their axons to six to ten glomeruli that reside in globally conserved areas within the caudal accessory olfactory bulb (AOB).

Its subcellular location is the cell membrane. Functionally, putative pheromone receptor. The polypeptide is Vomeronasal type-2 receptor 26 (Vmn2r26) (Mus musculus (Mouse)).